We begin with the raw amino-acid sequence, 415 residues long: Lipoyl synthase, mitochondrial (415 aa).

A mitochondrion-targeting transit peptide spans 1–33; that stretch reads MAASTSHLRSLCSSTRSLSRSGVIVTPIACRGY. Positions 132, 137, 143, 163, 167, 170, and 378 each coordinate [4Fe-4S] cluster. In terms of domain architecture, Radical SAM core spans 148-367; the sequence is DKSSATATIM…RQRALEMGFL (220 aa).

This sequence belongs to the radical SAM superfamily. Lipoyl synthase family. [4Fe-4S] cluster serves as cofactor.

It is found in the mitochondrion. It catalyses the reaction [[Fe-S] cluster scaffold protein carrying a second [4Fe-4S](2+) cluster] + N(6)-octanoyl-L-lysyl-[protein] + 2 oxidized [2Fe-2S]-[ferredoxin] + 2 S-adenosyl-L-methionine + 4 H(+) = [[Fe-S] cluster scaffold protein] + N(6)-[(R)-dihydrolipoyl]-L-lysyl-[protein] + 4 Fe(3+) + 2 hydrogen sulfide + 2 5'-deoxyadenosine + 2 L-methionine + 2 reduced [2Fe-2S]-[ferredoxin]. It participates in protein modification; protein lipoylation via endogenous pathway; protein N(6)-(lipoyl)lysine from octanoyl-[acyl-carrier-protein]: step 2/2. Functionally, catalyzes the radical-mediated insertion of two sulfur atoms into the C-6 and C-8 positions of the octanoyl moiety bound to the lipoyl domains of lipoate-dependent enzymes, thereby converting the octanoylated domains into lipoylated derivatives. The sequence is that of Lipoyl synthase, mitochondrial from Aspergillus clavatus (strain ATCC 1007 / CBS 513.65 / DSM 816 / NCTC 3887 / NRRL 1 / QM 1276 / 107).